The primary structure comprises 408 residues: Lipoate--protein ligase 1 (408 aa).

A mitochondrion-targeting transit peptide spans 1–18 (MKRIFRLVRRCHYSTEKR). The BPL/LPL catalytic domain occupies 60-242 (KFNEPILFLW…EFTKFYEQNY (183 aa)). Positions 102, 107, and 110 each coordinate ATP. Gly107 contacts (R)-lipoate. Asp153 provides a ligand contact to Mg(2+). Lys160 is an ATP binding site. (R)-lipoate is bound at residue Lys160.

This sequence belongs to the LplA family.

The protein localises to the mitochondrion. The enzyme catalyses L-lysyl-[lipoyl-carrier protein] + (R)-lipoate + ATP = N(6)-[(R)-lipoyl]-L-lysyl-[lipoyl-carrier protein] + AMP + diphosphate + H(+). The catalysed reaction is (R)-dihydrolipoate + L-lysyl-[lipoyl-carrier protein] + ATP = N(6)-[(R)-dihydrolipoyl]-L-lysyl-[lipoyl-carrier protein] + AMP + diphosphate + H(+). It catalyses the reaction (R)-dihydrolipoate + ATP + H(+) = N(6)-[(R)-dihydrolipoyl]-5'-AMP + diphosphate. It carries out the reaction N(6)-[(R)-dihydrolipoyl]-5'-AMP + L-lysyl-[lipoyl-carrier protein] = N(6)-[(R)-dihydrolipoyl]-L-lysyl-[lipoyl-carrier protein] + AMP + 2 H(+). It functions in the pathway protein modification; protein lipoylation via exogenous pathway; protein N(6)-(lipoyl)lysine from lipoate: step 1/2. Its pathway is protein modification; protein lipoylation via exogenous pathway; protein N(6)-(lipoyl)lysine from lipoate: step 2/2. With respect to regulation, inhibited by the lipoate analog 8-bromo-octanoate (BrO). Catalytic activity is increased in the presence of Mg(2+). Functionally, catalyzes both the ATP-dependent activation of exogenously supplied lipoate to lipoyl-AMP and the transfer of the activated lipoyl onto the lipoyl domains of lipoate-dependent enzymes. In the mitochondrion, functions as a redox switch between two lipoylation routes. Senses the oxidation state of lipoate and determines which downstream enzymes will be lipoylated. In low reducing conditions, uses lipoate in its oxidized ring form to lipoylate glycine cleavage system H-protein GCVH. In high reducing conditions and together with LipL2, uses reduced lipoate (dihydrolipoate) to lipoylate the E2 component of the branched chain alpha-ketoacid dehydrogenase complex BCKDH-E2/BCDH and the E2 component of the alpha-ketoglutarate dehydrogenase complex KDH. LipL1 is responsible for catalysing the activation of lipoate, forming lipoyl-AMP while LipL2 is required but is not capable of catalyzing this reaction. This is Lipoate--protein ligase 1 from Plasmodium falciparum (isolate 3D7).